We begin with the raw amino-acid sequence, 134 residues long: NADH-quinone oxidoreductase subunit A (134 aa).

The next 3 helical transmembrane spans lie at 12 to 32 (FAIY…LAAL), 64 to 84 (FYLV…LFAW), and 93 to 113 (WVGF…LLYL).

Belongs to the complex I subunit 3 family. In terms of assembly, NDH-1 is composed of 14 different subunits. Subunits NuoA, H, J, K, L, M, N constitute the membrane sector of the complex.

The protein localises to the cell inner membrane. It carries out the reaction a quinone + NADH + 5 H(+)(in) = a quinol + NAD(+) + 4 H(+)(out). Its function is as follows. NDH-1 shuttles electrons from NADH, via FMN and iron-sulfur (Fe-S) centers, to quinones in the respiratory chain. The immediate electron acceptor for the enzyme in this species is believed to be ubiquinone. Couples the redox reaction to proton translocation (for every two electrons transferred, four hydrogen ions are translocated across the cytoplasmic membrane), and thus conserves the redox energy in a proton gradient. This Aeromonas salmonicida (strain A449) protein is NADH-quinone oxidoreductase subunit A.